The chain runs to 351 residues: DNA polymerase IV (351 aa).

The UmuC domain maps to 4 to 185; that stretch reads IIHVDMDCFF…LPLAKIPGVG (182 aa). Mg(2+)-binding residues include aspartate 8 and aspartate 103. Glutamate 104 is a catalytic residue.

It belongs to the DNA polymerase type-Y family. Monomer. Requires Mg(2+) as cofactor.

The protein localises to the cytoplasm. The catalysed reaction is DNA(n) + a 2'-deoxyribonucleoside 5'-triphosphate = DNA(n+1) + diphosphate. Poorly processive, error-prone DNA polymerase involved in untargeted mutagenesis. Copies undamaged DNA at stalled replication forks, which arise in vivo from mismatched or misaligned primer ends. These misaligned primers can be extended by PolIV. Exhibits no 3'-5' exonuclease (proofreading) activity. May be involved in translesional synthesis, in conjunction with the beta clamp from PolIII. The protein is DNA polymerase IV of Shigella dysenteriae serotype 1 (strain Sd197).